The sequence spans 125 residues: Large ribosomal subunit protein bL12 (125 aa).

This sequence belongs to the bacterial ribosomal protein bL12 family. As to quaternary structure, homodimer. Part of the ribosomal stalk of the 50S ribosomal subunit. Forms a multimeric L10(L12)X complex, where L10 forms an elongated spine to which 2 to 4 L12 dimers bind in a sequential fashion. Binds GTP-bound translation factors.

Its function is as follows. Forms part of the ribosomal stalk which helps the ribosome interact with GTP-bound translation factors. Is thus essential for accurate translation. The chain is Large ribosomal subunit protein bL12 from Gluconobacter oxydans (strain 621H) (Gluconobacter suboxydans).